We begin with the raw amino-acid sequence, 184 residues long: Ribosome-recycling factor (184 aa).

Residues 133 to 153 (DSNDELKKQQKNSDITEDDLR) are disordered.

This sequence belongs to the RRF family.

The protein localises to the cytoplasm. Functionally, responsible for the release of ribosomes from messenger RNA at the termination of protein biosynthesis. May increase the efficiency of translation by recycling ribosomes from one round of translation to another. The polypeptide is Ribosome-recycling factor (Staphylococcus saprophyticus subsp. saprophyticus (strain ATCC 15305 / DSM 20229 / NCIMB 8711 / NCTC 7292 / S-41)).